The following is a 389-amino-acid chain: MAMNYLEAFPKELREYYKNLFGKEEANKIMKKLREPVEHYYIRVNTLKISREKLIGELKKEGLKPLRSPYLPEGLYFVREGPNFSDDFEPKLPVVVANKYAAESVYQGAMLYAPGVLKADKNIKEGDEVQIRDPKGLLVGIGIARMDYKEMTEATRGLAVEVTLPKFKLPSLSELKAFEKGYFYPQGLPSMVTARVLEPKEDDVIIDMAAAPGGKTTHIAQLLENKGEIIAIDKSKNRLRKMEENIKRLGVKNVKLVQMDARKLPDLGIKADKILLDAPCTALGVRPKLWEERTLKHIEATARYQRAFIWAAIKSLRRGGVLVYSTCTLSYEENEGNVKFMIRKGMKLEEQSIFIGSPGIGMNKVQRFYPHKHLTQGFFIAKLRKVKDI.

The 76-residue stretch at 92–167 folds into the PUA domain; that stretch reads LPVVVANKYA…LAVEVTLPKF (76 aa). S-adenosyl-L-methionine contacts are provided by residues 209–215, aspartate 233, arginine 238, aspartate 260, aspartate 277, and tyrosine 304; that span reads AAAPGGK. The active-site Nucleophile is the cysteine 327.

This sequence belongs to the class I-like SAM-binding methyltransferase superfamily. RsmB/NOP family.

The enzyme catalyses cytidine(72) in tRNA + S-adenosyl-L-methionine = 5-methylcytidine(72) in tRNA + S-adenosyl-L-homocysteine + H(+). It carries out the reaction cytidine(72) in tRNA(Thr) + S-adenosyl-L-methionine = 5-methylcytidine(72) in tRNA(Thr) + S-adenosyl-L-homocysteine + H(+). The catalysed reaction is cytidine(72) in tRNA(Cys) + S-adenosyl-L-methionine = 5-methylcytidine(72) in tRNA(Cys) + S-adenosyl-L-homocysteine + H(+). S-adenosyl-L-methionine-dependent methyltransferase that specifically methylates the C5 position of cytosine 72 in several tRNAs. This modification appears to slightly promote the thermal stability of P.horikoshii tRNAs, but does not affect their amino acid accepting activity. Four elements in the acceptor stems of tRNAs are essential for substrate recognition by this enzyme: the target site C72, the 3'-CCA terminus, U73 or G73, and the second base pair C2:G71. In Pyrococcus horikoshii (strain ATCC 700860 / DSM 12428 / JCM 9974 / NBRC 100139 / OT-3), this protein is tRNA (cytosine(72)-C(5))-methyltransferase.